Here is a 329-residue protein sequence, read N- to C-terminus: tRNA (cytidine(32)/guanosine(34)-2'-O)-methyltransferase (329 aa).

The S-adenosyl-L-methionine site is built by Gly53, Trp55, Asp75, Asp91, and Asp116. The active-site Proton acceptor is Lys156. Residues 221-240 (DFNQLDGPTRIIVPFVTCGD) are required for binding to WDR6. Phosphoserine is present on Ser271.

Belongs to the class I-like SAM-binding methyltransferase superfamily. RNA methyltransferase RlmE family. TRM7 subfamily. Interacts with WDR6; the interaction is direct, and required for 2'-O-methylation of position 34 in substrate tRNAs. As to expression, found in fetal brain, lung, liver and kidney. Widely expressed in adult tissue; with high expression in heart and liver, lower expression in skeletal muscle, kidney, and pancreas and also lowly expressed in brain and lung. In the adult brain, expressed in amygdala, caudate nucleus, corpus callosum, hippocampus and thalamus.

Its subcellular location is the cytoplasm. It localises to the nucleus. The enzyme catalyses cytidine(32)/guanosine(34) in tRNA + 2 S-adenosyl-L-methionine = 2'-O-methylcytidine(32)/2'-O-methylguanosine(34) in tRNA + 2 S-adenosyl-L-homocysteine + 2 H(+). Inhibited by 2,6-diaminopurine (DAP); inhibition promotes UGA stop-codon readthrough during translation by misincorporation of tRNA(Trp) in the nascent polypeptide. Functionally, methylates the 2'-O-ribose of nucleotides at positions 32 and 34 of the tRNA anticodon loop of substrate tRNAs. Requisite for faithful cytoplasmic translation. Requires THADA for methylation of the nucleotide at position 32 of the anticodon loop of substrate tRNAs. Requires WDR6 for methylation of the nucleotide at position 34 of the anticodon loop of substrate tRNAs. Promotes translation efficiency of the UUU codon. Plays a role in neurogenesis. Required for expression of genes involved in neurogenesis, mitochondrial translation and energy generation, and lipid biosynthesis. Requisite for RNA-mediated gene silencing. May modify position 32 in tRNA(Arg(ACG)), tRNA(Arg(CCG)), tRNA(Arg(UCG)), tRNA(Cys(GCA)), tRNA(Cys(ACA)), tRNA(Gln(CUG)), tRNA(Gln(UUG)), tRNA(Gly(CCC)), tRNA(Leu(CAG))/tRNA(Leu(CAA)), tRNA(Leu(A/IAG)), tRNA(Leu(UAG)), tRNA(Phe(GAA)), tRNA(Pro(AGG))/tRNA(Pro(CGG))/tRNA(Pro(UGG)) and tRNA(Trp(CCA)), and position 34 in tRNA(Phe(GAA)), tRNA(Leu(CAA)), tRNA(Sec(UCA)), and tRNA(Trp(CCA)). The sequence is that of tRNA (cytidine(32)/guanosine(34)-2'-O)-methyltransferase from Homo sapiens (Human).